A 213-amino-acid polypeptide reads, in one-letter code: uncharacterized protein (213 aa).

Residues Gly-53, Glu-74, and Asp-97 each coordinate S-adenosyl-L-methionine.

This sequence belongs to the methyltransferase superfamily. YrrT family.

Functionally, could be a S-adenosyl-L-methionine-dependent methyltransferase. This is an uncharacterized protein from Bacillus subtilis (strain 168).